Consider the following 140-residue polypeptide: MSSRSIMGFDYGTKSIGVAIGQELTGTGQPLRAIKANDGIPNWDDIDKLLKEWQPDLLVVGLPLNMDGTEQEITVRARKFGNRLHGRFWQAVEFKDERLTTTDARARLFERGGYRALEKGSVDGVSAQLILEAWMEEQYG.

It belongs to the YqgF nuclease family.

The protein localises to the cytoplasm. Its function is as follows. Could be a nuclease involved in processing of the 5'-end of pre-16S rRNA. This Aeromonas hydrophila protein is Putative pre-16S rRNA nuclease.